The sequence spans 199 residues: Recombination protein RecR (199 aa).

A C4-type zinc finger spans residues 58–73 (CLNCGNIGTSDICDIC). The region spanning 81–176 (GEICVVEDVA…AVTSLAQGVP (96 aa)) is the Toprim domain.

Belongs to the RecR family.

May play a role in DNA repair. It seems to be involved in an RecBC-independent recombinational process of DNA repair. It may act with RecF and RecO. The polypeptide is Recombination protein RecR (Dinoroseobacter shibae (strain DSM 16493 / NCIMB 14021 / DFL 12)).